We begin with the raw amino-acid sequence, 190 residues long: Female-specific histamine-binding protein 2 (190 aa).

The signal sequence occupies residues 1–19; it reads MKLLILSLALVLALSQVKG. Residues serine 39, aspartate 43, tyrosine 55, aspartate 58, tryptophan 61, glutamate 101, phenylalanine 117, tyrosine 119, phenylalanine 127, aspartate 139, glutamate 154, and tryptophan 156 each coordinate histamine. Cystine bridges form between cysteine 67–cysteine 188 and cysteine 138–cysteine 167.

It belongs to the calycin superfamily. Histamine-binding salivary protein family. As to quaternary structure, monomer. Expressed in salivary glands.

The protein resides in the secreted. Salivary tick protein that acts by scavenging histamine at the wound site, outcompeting histamine receptors for histamine, thereby overcoming host inflammatory responses. Binds histamine with a high-affinity (Kd=1.7 nM). Contains two binding histamine sites (H and L), that appear to bind histamine with differing affinities (high and low). The sequence is that of Female-specific histamine-binding protein 2 from Rhipicephalus appendiculatus (Brown ear tick).